Consider the following 349-residue polypeptide: Flap endonuclease 1 (349 aa).

Residues Met1 to Lys98 form an N-domain region. Mg(2+)-binding residues include Asp27, Asp80, Glu152, Glu154, Asp173, Asp175, and Asp236. The interval Glu116–Asn258 is I-domain. Positions Lys341–Phe349 are interaction with PCNA.

The protein belongs to the XPG/RAD2 endonuclease family. FEN1 subfamily. In terms of assembly, interacts with PCNA. PCNA stimulates the nuclease activity without altering cleavage specificity. Mg(2+) serves as cofactor.

Structure-specific nuclease with 5'-flap endonuclease and 5'-3' exonuclease activities involved in DNA replication and repair. During DNA replication, cleaves the 5'-overhanging flap structure that is generated by displacement synthesis when DNA polymerase encounters the 5'-end of a downstream Okazaki fragment. Binds the unpaired 3'-DNA end and kinks the DNA to facilitate 5' cleavage specificity. Cleaves one nucleotide into the double-stranded DNA from the junction in flap DNA, leaving a nick for ligation. Also involved in the base excision repair (BER) pathway. Acts as a genome stabilization factor that prevents flaps from equilibrating into structures that lead to duplications and deletions. Also possesses 5'-3' exonuclease activity on nicked or gapped double-stranded DNA. The polypeptide is Flap endonuclease 1 (Sulfolobus acidocaldarius (strain ATCC 33909 / DSM 639 / JCM 8929 / NBRC 15157 / NCIMB 11770)).